We begin with the raw amino-acid sequence, 249 residues long: Flavin-dependent thymidylate synthase (249 aa).

Residues 8-225 (VKVKLLEYTP…PNLFKYSGPS (218 aa)) form the ThyX domain. FAD contacts are provided by residues serine 62, 86-88 (RHR), and glutamine 94. DUMP contacts are provided by residues 83 to 86 (QLVR), 94 to 98 (QQSQR), and arginine 164. The ThyX motif signature appears at 86–96 (RHRIASYSQQS). FAD-binding positions include 180 to 182 (NAR) and asparagine 186. Arginine 191 is a dUMP binding site. Arginine 191 acts as the Involved in ionization of N3 of dUMP, leading to its activation in catalysis.

This sequence belongs to the thymidylate synthase ThyX family. As to quaternary structure, homotetramer. FAD is required as a cofactor.

The catalysed reaction is dUMP + (6R)-5,10-methylene-5,6,7,8-tetrahydrofolate + NADPH + H(+) = dTMP + (6S)-5,6,7,8-tetrahydrofolate + NADP(+). The protein operates within pyrimidine metabolism; dTTP biosynthesis. In terms of biological role, catalyzes the reductive methylation of 2'-deoxyuridine-5'-monophosphate (dUMP) to 2'-deoxythymidine-5'-monophosphate (dTMP) while utilizing 5,10-methylenetetrahydrofolate (mTHF) as the methyl donor, and NADPH and FADH(2) as the reductant. In Clostridium tetani (strain Massachusetts / E88), this protein is Flavin-dependent thymidylate synthase.